A 470-amino-acid polypeptide reads, in one-letter code: Ribulose bisphosphate carboxylase large chain (470 aa).

K5 carries the N6,N6,N6-trimethyllysine modification. Residues N114 and T164 each coordinate substrate. The active-site Proton acceptor is the K166. Substrate is bound at residue K168. Positions 192, 194, and 195 each coordinate Mg(2+). K192 carries the post-translational modification N6-carboxylysine. H285 functions as the Proton acceptor in the catalytic mechanism. Substrate is bound by residues R286, H318, and S370.

It belongs to the RuBisCO large chain family. Type I subfamily. In terms of assembly, heterohexadecamer of 8 large chains and 8 small chains; disulfide-linked. The disulfide link is formed within the large subunit homodimers. Mg(2+) is required as a cofactor. The disulfide bond which can form in the large chain dimeric partners within the hexadecamer appears to be associated with oxidative stress and protein turnover.

It is found in the plastid. The protein localises to the chloroplast. It carries out the reaction 2 (2R)-3-phosphoglycerate + 2 H(+) = D-ribulose 1,5-bisphosphate + CO2 + H2O. The catalysed reaction is D-ribulose 1,5-bisphosphate + O2 = 2-phosphoglycolate + (2R)-3-phosphoglycerate + 2 H(+). Functionally, ruBisCO catalyzes two reactions: the carboxylation of D-ribulose 1,5-bisphosphate, the primary event in carbon dioxide fixation, as well as the oxidative fragmentation of the pentose substrate in the photorespiration process. Both reactions occur simultaneously and in competition at the same active site. This Bertiera breviflora protein is Ribulose bisphosphate carboxylase large chain.